Reading from the N-terminus, the 321-residue chain is Sideroflexin-3 (321 aa).

Methionine 1 bears the N-acetylmethionine mark. Helical transmembrane passes span 146–164 (LGTAYVSATTGAVATALGL), 174–194 (LVGRFVPFAAVAAANCINIPL), 225–245 (IFQVVISRIGMAIPAMAIPPV), and 266–286 (LQVGLVGFCLVFATPLCCALF).

This sequence belongs to the sideroflexin family. Widely expressed.

It localises to the mitochondrion membrane. It carries out the reaction L-serine(in) = L-serine(out). Its function is as follows. Mitochondrial serine transporter that mediates transport of serine into mitochondria, an important step of the one-carbon metabolism pathway. Mitochondrial serine is converted to glycine and formate, which then exits to the cytosol where it is used to generate the charged folates that serve as one-carbon donors. The protein is Sideroflexin-3 of Mus musculus (Mouse).